An 85-amino-acid chain; its full sequence is MKNHPRKVKFRVSSAKFICIYWFFCLYYKDGPILYTIYTTFLSHRYSYSTFIILRNTVAFLSFMYKHYYTHISYLTFYKSPKTFY.

The next 2 helical transmembrane spans lie at 20 to 42 (IYWFFCLYYKDGPILYTIYTTFL) and 52 to 69 (IILRNTVAFLSFMYKHYY).

The protein resides in the membrane. This is an uncharacterized protein from Saccharomyces cerevisiae (strain ATCC 204508 / S288c) (Baker's yeast).